Reading from the N-terminus, the 322-residue chain is Transcription cofactor vestigial-like protein 2 (322 aa).

The segment covering 42–61 (ASPGSSASGSSSFSNPTPAS) has biased composition (low complexity). Disordered stretches follow at residues 42-75 (ASPGSSASGSSSFSNPTPASVKEEEGSPEKERPP) and 248-322 (PGRL…PTLG). A compositionally biased stretch (basic and acidic residues) spans 62 to 75 (VKEEEGSPEKERPP). 2 stretches are compositionally biased toward low complexity: residues 248–258 (PGRLAPASAPA) and 270–283 (GEPAGSAWAAPGGP). Residues 312 to 322 (SAPPALYPTLG) are compositionally biased toward pro residues.

Belongs to the vestigial family. As to quaternary structure, interacts with TEFs. Binds to TEAD1/TEF1. Skeletal muscle specific.

It is found in the nucleus. Functionally, may act as a specific coactivator for the mammalian TEFs. May play a role in the development of skeletal muscles. The protein is Transcription cofactor vestigial-like protein 2 (Vgll2) of Mus musculus (Mouse).